We begin with the raw amino-acid sequence, 531 residues long: T-complex protein 1 subunit zeta (531 aa).

An N-acetylalanine modification is found at Ala2. Lys5 carries the post-translational modification N6-acetyllysine. Gly39 contacts ADP. Gly39 provides a ligand contact to ATP. Residue Asp90 coordinates Mg(2+). Residues Gly91, Thr92, Thr93, Ser94, Thr158, and Lys159 each contribute to the ADP site. 3 residues coordinate ATP: Gly91, Thr92, and Thr93. Lys199 is modified (N6-acetyllysine). At Ser205 the chain carries Phosphoserine. Lys251 participates in a covalent cross-link: Glycyl lysine isopeptide (Lys-Gly) (interchain with G-Cter in SUMO2). 4 positions are modified to N6-acetyllysine: Lys287, Lys365, Lys377, and Lys388. An ADP-binding site is contributed by Ala411. ATP is bound by residues Ala411, Gly412, Asp496, and Lys501. Asp496 lines the ADP pocket.

It belongs to the TCP-1 chaperonin family. As to quaternary structure, component of the chaperonin-containing T-complex (TRiC), a hexadecamer composed of two identical back-to-back stacked rings enclosing a protein folding chamber. Each ring is made up of eight different subunits: TCP1/CCT1, CCT2, CCT3, CCT4, CCT5, CCT6A/CCT6, CCT7, CCT8. Interacts with PACRG.

It is found in the cytoplasm. The catalysed reaction is ATP + H2O = ADP + phosphate + H(+). Functionally, component of the chaperonin-containing T-complex (TRiC), a molecular chaperone complex that assists the folding of actin, tubulin and other proteins upon ATP hydrolysis. The TRiC complex mediates the folding of WRAP53/TCAB1, thereby regulating telomere maintenance. The chain is T-complex protein 1 subunit zeta (CCT6A) from Homo sapiens (Human).